The primary structure comprises 199 residues: Ribonuclease P protein subunit p25 (199 aa).

Basic and acidic residues predominate over residues Met1–Glu11. Disordered stretches follow at residues Met1–Phe28 and Leu144–Ala199. The span at Tyr151–Ala166 shows a compositional bias: pro residues. 2 positions are modified to phosphoserine: Ser172 and Ser182.

Belongs to the histone-like Alba family. As to quaternary structure, component of nuclear RNase P and RNase MRP ribonucleoproteins. RNase P consists of a catalytic RNA moiety and 10 different protein chains; POP1, POP4, POP5, POP7, RPP14, RPP21, RPP25, RPP30, RPP38 and RPP40. Within the RNase P complex, POP1, POP7 and RPP25 form the 'finger' subcomplex, POP5, RPP14, RPP40 and homodimeric RPP30 form the 'palm' subcomplex, and RPP21, POP4 and RPP38 form the 'wrist' subcomplex. All subunits of the RNase P complex interact with the catalytic RNA. Several subunits of RNase P are also part of the RNase MRP complex. RNase MRP consists of a catalytic RNA moiety and about 8 protein subunits; POP1, POP7, RPP25, RPP30, RPP38, RPP40 and possibly also POP4 and POP5. POP7 forms a heterodimer with RPP25 that binds to the P3 stem loop of the catalytic RNA.

The protein resides in the nucleus. It is found in the nucleolus. Component of ribonuclease P, a ribonucleoprotein complex that generates mature tRNA molecules by cleaving their 5'-ends. Also a component of the MRP ribonuclease complex, which cleaves pre-rRNA sequences. The protein is Ribonuclease P protein subunit p25 (RPP25) of Homo sapiens (Human).